Here is a 141-residue protein sequence, read N- to C-terminus: Large ribosomal subunit protein uL11 (141 aa).

This sequence belongs to the universal ribosomal protein uL11 family. Part of the ribosomal stalk of the 50S ribosomal subunit. Interacts with L10 and the large rRNA to form the base of the stalk. L10 forms an elongated spine to which L12 dimers bind in a sequential fashion forming a multimeric L10(L12)X complex. One or more lysine residues are methylated.

In terms of biological role, forms part of the ribosomal stalk which helps the ribosome interact with GTP-bound translation factors. The chain is Large ribosomal subunit protein uL11 from Prochlorococcus marinus (strain MIT 9215).